Here is a 454-residue protein sequence, read N- to C-terminus: tRNA modification GTPase MnmE (454 aa).

Residues Arg-23, Glu-80, and Lys-120 each contribute to the (6S)-5-formyl-5,6,7,8-tetrahydrofolate site. One can recognise a TrmE-type G domain in the interval Gly-216–Gly-377. K(+) is bound at residue Asn-226. GTP is bound by residues Asn-226 to Ser-231, Thr-245 to Thr-251, Asp-270 to Gly-273, Asn-335 to Asp-338, and Ser-358 to Arg-360. Position 230 (Ser-230) interacts with Mg(2+). K(+)-binding residues include Thr-245, Ile-247, and Thr-250. Thr-251 contacts Mg(2+). Lys-454 contacts (6S)-5-formyl-5,6,7,8-tetrahydrofolate.

It belongs to the TRAFAC class TrmE-Era-EngA-EngB-Septin-like GTPase superfamily. TrmE GTPase family. In terms of assembly, homodimer. Heterotetramer of two MnmE and two MnmG subunits. K(+) is required as a cofactor.

Its subcellular location is the cytoplasm. Its function is as follows. Exhibits a very high intrinsic GTPase hydrolysis rate. Involved in the addition of a carboxymethylaminomethyl (cmnm) group at the wobble position (U34) of certain tRNAs, forming tRNA-cmnm(5)s(2)U34. In Yersinia pestis bv. Antiqua (strain Antiqua), this protein is tRNA modification GTPase MnmE.